The chain runs to 156 residues: 6,7-dimethyl-8-ribityllumazine synthase (156 aa).

5-amino-6-(D-ribitylamino)uracil-binding positions include Phe-22, 57–59, and 81–83; these read AYE and TVI. (2S)-2-hydroxy-3-oxobutyl phosphate is bound at residue 86-87; that stretch reads GT. The active-site Proton donor is the His-89. Phe-114 lines the 5-amino-6-(D-ribitylamino)uracil pocket. Position 128 (Arg-128) interacts with (2S)-2-hydroxy-3-oxobutyl phosphate.

This sequence belongs to the DMRL synthase family. As to quaternary structure, forms an icosahedral capsid composed of 60 subunits, arranged as a dodecamer of pentamers.

The enzyme catalyses (2S)-2-hydroxy-3-oxobutyl phosphate + 5-amino-6-(D-ribitylamino)uracil = 6,7-dimethyl-8-(1-D-ribityl)lumazine + phosphate + 2 H2O + H(+). Its pathway is cofactor biosynthesis; riboflavin biosynthesis; riboflavin from 2-hydroxy-3-oxobutyl phosphate and 5-amino-6-(D-ribitylamino)uracil: step 1/2. In terms of biological role, catalyzes the formation of 6,7-dimethyl-8-ribityllumazine by condensation of 5-amino-6-(D-ribitylamino)uracil with 3,4-dihydroxy-2-butanone 4-phosphate. This is the penultimate step in the biosynthesis of riboflavin. This Sodalis glossinidius (strain morsitans) protein is 6,7-dimethyl-8-ribityllumazine synthase.